The sequence spans 148 residues: MKALFLIGLLALVASTAFAQYSEVVGSYDVAGGGGAQQCPVETKLNSCRNYLLDRCSTMKDFPVTWRWWKWWKGGCQELLGECCSRLGQMPPQCRCNIIQGSIQGDLGGIFGFQRDRASKVIQEAKNLPPRCNQGPPCNIPGTIGYYW.

The first 19 residues, 1–19, serve as a signal peptide directing secretion; it reads MKALFLIGLLALVASTAFA. A propeptide spanning residues 20–28 is cleaved from the precursor; that stretch reads QYSEVVGSY. Residues 147–148 constitute a propeptide, removed in mature form; that stretch reads YW.

In terms of processing, five disulfide bonds are present. As to expression, endosperm and aleurone layer of developing kernels. In the aleurone layer, mainly localized to starch granules and the surface of the plasma membrane, forming a uniform layer, also abundant in the intercellular space. In the endosperm, mainly localized to starch granules and the plasma membrane, but less abundant in the intercellular space. Not found in roots or coleoptiles.

The protein localises to the membrane. The protein resides in the secreted. Its subcellular location is the extracellular space. Its function is as follows. Acts as a membranotoxin, probably through its antibacterial and antifungal activities, contributing to the defense mechanism of the plant against predators. Forms monovalent cation-selective ion channels in membranes. Has antibacterial activity against the Gram-positive bacteria S.aureus and C.michiganensis, and the Gram-negative bacteria E.coli, P.syringae pv phaseoli, A.tumefaciens and E.carotovora subsp carotovora. Acts synergistically with PINB against bacteria. Contributes to grain texture and hardness. In Triticum aestivum (Wheat), this protein is Puroindoline-A (PINA).